The chain runs to 265 residues: Undecaprenyl-diphosphatase (265 aa).

8 helical membrane-spanning segments follow: residues 7 to 27 (VIVS…PISS), 45 to 65 (TKIL…YFFH), 86 to 106 (LHIL…YKKI), 108 to 128 (LLFN…FLLI), 145 to 165 (ISLL…YPGF), 186 to 206 (IEFS…YDFI), 214 to 234 (ILDL…SILC), and 245 to 265 (TSLI…YFIN).

Belongs to the UppP family.

Its subcellular location is the cell membrane. The catalysed reaction is di-trans,octa-cis-undecaprenyl diphosphate + H2O = di-trans,octa-cis-undecaprenyl phosphate + phosphate + H(+). Functionally, catalyzes the dephosphorylation of undecaprenyl diphosphate (UPP). Confers resistance to bacitracin. In Buchnera aphidicola subsp. Acyrthosiphon pisum (strain 5A), this protein is Undecaprenyl-diphosphatase.